Consider the following 24-residue polypeptide: MAWTKPAYTDLRIGFEVTMYFASR.

The pyrroloquinoline quinone (Glu-Tyr) cross-link spans 16–20 (EVTMY).

Belongs to the PqqA family.

It participates in cofactor biosynthesis; pyrroloquinoline quinone biosynthesis. Its function is as follows. Required for coenzyme pyrroloquinoline quinone (PQQ) biosynthesis. PQQ is probably formed by cross-linking a specific glutamate to a specific tyrosine residue and excising these residues from the peptide. The chain is Coenzyme PQQ synthesis protein A from Pseudomonas fluorescens (strain Pf0-1).